We begin with the raw amino-acid sequence, 110 residues long: Membrane-associated protein slr1513 (110 aa).

It localises to the cellular thylakoid membrane. Its subcellular location is the cell membrane. The sequence is that of Membrane-associated protein slr1513 from Synechocystis sp. (strain ATCC 27184 / PCC 6803 / Kazusa).